The following is a 312-amino-acid chain: Malate dehydrogenase (312 aa).

Residues 7-13 (GAAGGIG) and Asp34 contribute to the NAD(+) site. Residues Arg81 and Arg87 each contribute to the substrate site. Residues Asn94 and 117 to 119 (ITN) contribute to the NAD(+) site. Residues Asn119 and Arg153 each coordinate substrate. The active-site Proton acceptor is the His177. Met227 contributes to the NAD(+) binding site.

The protein belongs to the LDH/MDH superfamily. MDH type 1 family. In terms of assembly, homodimer.

The enzyme catalyses (S)-malate + NAD(+) = oxaloacetate + NADH + H(+). In terms of biological role, catalyzes the reversible oxidation of malate to oxaloacetate. This Salmonella dublin (strain CT_02021853) protein is Malate dehydrogenase.